Consider the following 180-residue polypeptide: MADKITLWTDLVSELRKKLTKKEMATLQEIIDENGSIEDVIVTLVRKAVNPDLLSISDIELCMQKAIKIGAYVTATGGGSPRSNDNMPSQIAREVVEEAYGGSPEQQQQQNPLQNMMKQMADAISTAIMSEVSSKLKSVMPVPMPQQNSDNGSTPHIVDSSKSKDKSSNDGDNGVFTGDE.

Residues 138 to 180 (SVMPVPMPQQNSDNGSTPHIVDSSKSKDKSSNDGDNGVFTGDE) form a disordered region. Positions 145–154 (PQQNSDNGST) are enriched in polar residues. The span at 159–169 (DSSKSKDKSSN) shows a compositional bias: basic and acidic residues.

This is an uncharacterized protein from Acidianus filamentous virus 2 (isolate Italy/Pozzuoli) (AFV-2).